A 203-amino-acid chain; its full sequence is Thymidylate kinase (203 aa).

Residue 14–21 (GGEGIGKS) coordinates ATP.

Belongs to the thymidylate kinase family.

It carries out the reaction dTMP + ATP = dTDP + ADP. Functionally, phosphorylation of dTMP to form dTDP in both de novo and salvage pathways of dTTP synthesis. The polypeptide is Thymidylate kinase (Rickettsia rickettsii (strain Iowa)).